Consider the following 296-residue polypeptide: MGPTASGKTALALELAEKHNCEIISVDSALIYRGMDIGSAKPSAEELARGPHRLIDIRDPAESYSAADFRADALREIEQIISMGKTPVLVGGTMMYFKALLEGLSPLPSADEAIRAEIQAEADANGWEALHEQLREIDPVSAERIHPNDPQRLSRAIEVYRISGKSLTELTQTKSAPLPYDVVQFAIAPRERKVLHELIGQRFRIMLEQGFIDEVAQLKARGDLHLDLPSMRCVGYRQCWQYLDGEFDYDTMVEKAVAATRQLAKRQLTWLRSWPELNWLESGAEGNLVTLMRQCR.

Gly-2–Thr-9 serves as a coordination point for ATP. Residue Thr-4–Thr-9 coordinates substrate. Interaction with substrate tRNA regions lie at residues Asp-27–Leu-30, Gln-151–Arg-155, and Arg-232–Arg-237.

The protein belongs to the IPP transferase family. As to quaternary structure, monomer. The cofactor is Mg(2+).

The enzyme catalyses adenosine(37) in tRNA + dimethylallyl diphosphate = N(6)-dimethylallyladenosine(37) in tRNA + diphosphate. Catalyzes the transfer of a dimethylallyl group onto the adenine at position 37 in tRNAs that read codons beginning with uridine, leading to the formation of N6-(dimethylallyl)adenosine (i(6)A). The chain is tRNA dimethylallyltransferase from Shewanella sp. (strain ANA-3).